The primary structure comprises 215 residues: Small ribosomal subunit protein uS3 (215 aa).

A KH type-2 domain is found at 38-106 (LRAFLKKKLF…EVLIDIQEIR (69 aa)).

The protein belongs to the universal ribosomal protein uS3 family. As to quaternary structure, part of the 30S ribosomal subunit. Forms a tight complex with proteins S10 and S14.

Its function is as follows. Binds the lower part of the 30S subunit head. Binds mRNA in the 70S ribosome, positioning it for translation. The protein is Small ribosomal subunit protein uS3 of Desulforapulum autotrophicum (strain ATCC 43914 / DSM 3382 / VKM B-1955 / HRM2) (Desulfobacterium autotrophicum).